The chain runs to 348 residues: Centromere protein N-A (348 aa).

The protein belongs to the CENP-N/CHL4 family.

The protein localises to the nucleus. The protein resides in the chromosome. It localises to the centromere. Probable component of a centromeric complex involved in assembly of kinetochore proteins, mitotic progression and chromosome segregation. The sequence is that of Centromere protein N-A (cenpn-a) from Xenopus laevis (African clawed frog).